The chain runs to 1399 residues: Dicer-like protein 2 (1399 aa).

Positions 18–194 constitute a Helicase ATP-binding domain; that stretch reads MVEESMQSNI…EDLQQIERNL (177 aa). ATP is bound at residue 31 to 38; that stretch reads MDTGSGKT. The short motif at 139–142 is the DEAH box element; that stretch reads DEAH. A Helicase C-terminal domain is found at 364–549; it reads KLQLLIKFLV…QSETGHRNFE (186 aa). The 95-residue stretch at 562 to 656 folds into the Dicer dsRNA-binding fold domain; it reads ASQHLHHFCS…LPARQEADDE (95 aa). 2 consecutive RNase III domains span residues 897 to 1054 and 1094 to 1270; these read LPSI…TVGG and LDVL…IDSL. Mg(2+) contacts are provided by E1133, D1256, and E1259. A DRBM domain is found at 1301–1370; that stretch reads HPKERLGHLA…AWKAVGVLES (70 aa).

This sequence belongs to the helicase family. Dicer subfamily. Mg(2+) serves as cofactor. The cofactor is Mn(2+).

Dicer-like endonuclease involved in cleaving double-stranded RNA in the RNA interference (RNAi) pathway. Produces 21 to 25 bp dsRNAs (siRNAs) which target the selective destruction of homologous RNAs leading to sequence-specific suppression of gene expression, called post-transcriptional gene silencing (PTGS). Part of a broad host defense response against viral infection and transposons. The protein is Dicer-like protein 2 (DCL2) of Phaeosphaeria nodorum (strain SN15 / ATCC MYA-4574 / FGSC 10173) (Glume blotch fungus).